The sequence spans 204 residues: Probable 5-formyltetrahydrofolate cyclo-ligase (204 aa).

Position 5 to 9 (5 to 9 (KNQLR)) interacts with ATP. Substrate is bound by residues Glu-57, Trp-102, and 140–144 (HGKGY). Residues 139 to 146 (GHGKGYYD) and Asp-188 each bind ATP.

The protein belongs to the 5-formyltetrahydrofolate cyclo-ligase family.

The enzyme catalyses (6S)-5-formyl-5,6,7,8-tetrahydrofolate + ATP = (6R)-5,10-methenyltetrahydrofolate + ADP + phosphate. In Schizosaccharomyces pombe (strain 972 / ATCC 24843) (Fission yeast), this protein is Probable 5-formyltetrahydrofolate cyclo-ligase.